The sequence spans 512 residues: Pentatricopeptide repeat-containing protein At1g64583, mitochondrial (512 aa).

The transit peptide at M1–A34 directs the protein to the mitochondrion. 12 PPR repeats span residues S70 to H104, D105 to P139, S140 to P174, N175 to A209, D210 to P244, D245 to P279, N280 to P314, N315 to A349, D350 to P384, D385 to S415, G420 to P454, and D455 to C489.

Belongs to the PPR family. P subfamily.

It is found in the mitochondrion. The polypeptide is Pentatricopeptide repeat-containing protein At1g64583, mitochondrial (Arabidopsis thaliana (Mouse-ear cress)).